The chain runs to 399 residues: Tryptophan synthase beta chain (399 aa).

An N6-(pyridoxal phosphate)lysine modification is found at K92.

It belongs to the TrpB family. In terms of assembly, tetramer of two alpha and two beta chains. Pyridoxal 5'-phosphate is required as a cofactor.

It carries out the reaction (1S,2R)-1-C-(indol-3-yl)glycerol 3-phosphate + L-serine = D-glyceraldehyde 3-phosphate + L-tryptophan + H2O. Its pathway is amino-acid biosynthesis; L-tryptophan biosynthesis; L-tryptophan from chorismate: step 5/5. Its function is as follows. The beta subunit is responsible for the synthesis of L-tryptophan from indole and L-serine. The chain is Tryptophan synthase beta chain from Legionella pneumophila subsp. pneumophila (strain Philadelphia 1 / ATCC 33152 / DSM 7513).